A 238-amino-acid chain; its full sequence is tRNA (guanine-N(1)-)-methyltransferase (238 aa).

S-adenosyl-L-methionine is bound by residues Gly-110 and 129-134 (LGDFIL).

The protein belongs to the RNA methyltransferase TrmD family. Homodimer.

Its subcellular location is the cytoplasm. The catalysed reaction is guanosine(37) in tRNA + S-adenosyl-L-methionine = N(1)-methylguanosine(37) in tRNA + S-adenosyl-L-homocysteine + H(+). In terms of biological role, specifically methylates guanosine-37 in various tRNAs. The polypeptide is tRNA (guanine-N(1)-)-methyltransferase (Clostridium botulinum (strain Alaska E43 / Type E3)).